The sequence spans 476 residues: Aspartyl/glutamyl-tRNA(Asn/Gln) amidotransferase subunit B (476 aa).

The protein belongs to the GatB/GatE family. GatB subfamily. Heterotrimer of A, B and C subunits.

The enzyme catalyses L-glutamyl-tRNA(Gln) + L-glutamine + ATP + H2O = L-glutaminyl-tRNA(Gln) + L-glutamate + ADP + phosphate + H(+). It carries out the reaction L-aspartyl-tRNA(Asn) + L-glutamine + ATP + H2O = L-asparaginyl-tRNA(Asn) + L-glutamate + ADP + phosphate + 2 H(+). Functionally, allows the formation of correctly charged Asn-tRNA(Asn) or Gln-tRNA(Gln) through the transamidation of misacylated Asp-tRNA(Asn) or Glu-tRNA(Gln) in organisms which lack either or both of asparaginyl-tRNA or glutaminyl-tRNA synthetases. The reaction takes place in the presence of glutamine and ATP through an activated phospho-Asp-tRNA(Asn) or phospho-Glu-tRNA(Gln). The polypeptide is Aspartyl/glutamyl-tRNA(Asn/Gln) amidotransferase subunit B (Lactobacillus johnsonii (strain CNCM I-12250 / La1 / NCC 533)).